Consider the following 347-residue polypeptide: Ribosomal RNA small subunit methyltransferase C (347 aa).

This sequence belongs to the methyltransferase superfamily. RsmC family. Monomer.

Its subcellular location is the cytoplasm. The catalysed reaction is guanosine(1207) in 16S rRNA + S-adenosyl-L-methionine = N(2)-methylguanosine(1207) in 16S rRNA + S-adenosyl-L-homocysteine + H(+). Specifically methylates the guanine in position 1207 of 16S rRNA in the 30S particle. The polypeptide is Ribosomal RNA small subunit methyltransferase C (Shewanella baltica (strain OS195)).